A 205-amino-acid chain; its full sequence is Holliday junction branch migration complex subunit RuvA (205 aa).

The interval 1–63 (MIDFVEGTLS…EDAILLYGFA (63 aa)) is domain I. Residues 64–142 (TRDERDLFRK…GYTPSAILTV (79 aa)) form a domain II region. The tract at residues 143-153 (AAGDLTAGEQA) is flexible linker. The segment at 153-205 (AVSALNEALDALTALGYSDGELQKIRNTLSEKSKEGDGVEKLIKQGLALLMRG) is domain III.

It belongs to the RuvA family. Homotetramer. Forms an RuvA(8)-RuvB(12)-Holliday junction (HJ) complex. HJ DNA is sandwiched between 2 RuvA tetramers; dsDNA enters through RuvA and exits via RuvB. An RuvB hexamer assembles on each DNA strand where it exits the tetramer. Each RuvB hexamer is contacted by two RuvA subunits (via domain III) on 2 adjacent RuvB subunits; this complex drives branch migration. In the full resolvosome a probable DNA-RuvA(4)-RuvB(12)-RuvC(2) complex forms which resolves the HJ.

It is found in the cytoplasm. The RuvA-RuvB-RuvC complex processes Holliday junction (HJ) DNA during genetic recombination and DNA repair, while the RuvA-RuvB complex plays an important role in the rescue of blocked DNA replication forks via replication fork reversal (RFR). RuvA specifically binds to HJ cruciform DNA, conferring on it an open structure. The RuvB hexamer acts as an ATP-dependent pump, pulling dsDNA into and through the RuvAB complex. HJ branch migration allows RuvC to scan DNA until it finds its consensus sequence, where it cleaves and resolves the cruciform DNA. The sequence is that of Holliday junction branch migration complex subunit RuvA from Brevibacillus brevis (strain 47 / JCM 6285 / NBRC 100599).